The primary structure comprises 273 residues: tRNA pseudouridine synthase A (273 aa).

Aspartate 52 functions as the Nucleophile in the catalytic mechanism. Tyrosine 110 contacts substrate.

This sequence belongs to the tRNA pseudouridine synthase TruA family. Homodimer.

It catalyses the reaction uridine(38/39/40) in tRNA = pseudouridine(38/39/40) in tRNA. Formation of pseudouridine at positions 38, 39 and 40 in the anticodon stem and loop of transfer RNAs. The sequence is that of tRNA pseudouridine synthase A from Cupriavidus pinatubonensis (strain JMP 134 / LMG 1197) (Cupriavidus necator (strain JMP 134)).